The primary structure comprises 524 residues: RNA-splicing ligase RtcB homolog 1 (524 aa).

The Mn(2+) site is built by D141, C144, H249, H281, and H372. 248 to 252 (NHYLE) lines the GMP pocket. GMP-binding positions include 372–373 (HN), 421–424 (GGSM), S428, 447–450 (HGAG), and K523. H447 serves as the catalytic GMP-histidine intermediate.

It belongs to the RtcB family. Catalytic component of the tRNA-splicing ligase complex. Requires Mn(2+) as cofactor.

The catalysed reaction is a 3'-end 3'-phospho-ribonucleotide-RNA + a 5'-end dephospho-ribonucleoside-RNA + GTP = a ribonucleotidyl-ribonucleotide-RNA + GMP + diphosphate. It carries out the reaction a 3'-end 2',3'-cyclophospho-ribonucleotide-RNA + a 5'-end dephospho-ribonucleoside-RNA + GTP + H2O = a ribonucleotidyl-ribonucleotide-RNA + GMP + diphosphate + H(+). Functionally, catalytic subunit of the tRNA-splicing ligase complex that acts by directly joining spliced tRNA halves to mature-sized tRNAs by incorporating the precursor-derived splice junction phosphate into the mature tRNA as a canonical 3',5'-phosphodiester. May act as an RNA ligase with broad substrate specificity, and may function toward other RNAs. This is RNA-splicing ligase RtcB homolog 1 from Entamoeba histolytica (strain ATCC 30459 / HM-1:IMSS / ABRM).